The following is a 474-amino-acid chain: Trehalose-6-phosphate synthase (474 aa).

Arg10 lines the D-glucose 6-phosphate pocket. A UDP-alpha-D-glucose-binding site is contributed by 22 to 23 (GG). Tyr77 and Asp131 together coordinate D-glucose 6-phosphate. Residues Arg263 and Lys268 each contribute to the UDP-alpha-D-glucose site. Arg301 provides a ligand contact to D-glucose 6-phosphate. UDP-alpha-D-glucose-binding positions include Phe340 and 366–370 (LVAKE).

The protein belongs to the glycosyltransferase 20 family. Homotetramer.

It carries out the reaction D-glucose 6-phosphate + UDP-alpha-D-glucose = alpha,alpha-trehalose 6-phosphate + UDP + H(+). It participates in glycan biosynthesis; trehalose biosynthesis. Functionally, probably involved in the osmoprotection via the biosynthesis of trehalose. Catalyzes the transfer of glucose from UDP-alpha-D-glucose (UDP-Glc) to D-glucose 6-phosphate (Glc-6-P) to form trehalose-6-phosphate. Acts with retention of the anomeric configuration of the UDP-sugar donor. In Shigella dysenteriae serotype 1 (strain Sd197), this protein is Trehalose-6-phosphate synthase.